Reading from the N-terminus, the 211-residue chain is uncharacterized protein (211 aa).

This is an uncharacterized protein from Dictyostelium discoideum (Social amoeba).